We begin with the raw amino-acid sequence, 282 residues long: Transformer-2 protein homolog alpha (282 aa).

Positions M1 to N118 are disordered. At S2 the chain carries N-acetylserine. Phosphoserine is present on residues S2 and S14. Residue T24 is modified to Phosphothreonine. Positions R51–S84 are enriched in basic residues. Phosphoserine occurs at positions 82, 84, and 86. T88 is subject to Phosphothreonine. The span at R92 to G110 shows a compositional bias: basic residues. 2 positions are modified to phosphoserine: S96 and S98. Residues T119–T197 form the RRM domain. K198 is covalently cross-linked (Glycyl lysine isopeptide (Lys-Gly) (interchain with G-Cter in SUMO2)). A linker region spans residues K198–G225. Disordered regions lie at residues H201–G245 and S260–Y282. Phosphothreonine is present on residues T202 and T204. Gly residues predominate over residues S215–G230. R232 bears the Omega-N-methylarginine mark. Positions R232 to G245 are enriched in basic and acidic residues. At S236 the chain carries Phosphoserine. Over residues Y268–Y282 the composition is skewed to basic residues.

It belongs to the splicing factor SR family. In terms of assembly, binds to A3 enhancer proteins SRp75, SRp55, SRp40 and SRp30. Interacts with ILDR1 (via C-terminus) and ILDR2. Phosphorylated in the RS domains.

The protein resides in the nucleus. Sequence-specific RNA-binding protein which participates in the control of pre-mRNA splicing. In Homo sapiens (Human), this protein is Transformer-2 protein homolog alpha.